An 839-amino-acid polypeptide reads, in one-letter code: Glycerol-3-phosphate acyltransferase (839 aa).

Residues cysteine 309–isoleucine 314 carry the HXXXXD motif motif.

Belongs to the GPAT/DAPAT family.

It localises to the cell inner membrane. The catalysed reaction is sn-glycerol 3-phosphate + an acyl-CoA = a 1-acyl-sn-glycero-3-phosphate + CoA. Its pathway is phospholipid metabolism; CDP-diacylglycerol biosynthesis; CDP-diacylglycerol from sn-glycerol 3-phosphate: step 1/3. The chain is Glycerol-3-phosphate acyltransferase from Pseudomonas fluorescens (strain SBW25).